Here is a 358-residue protein sequence, read N- to C-terminus: Probable G-protein coupled receptor 25 (358 aa).

Over 1 to 43 the chain is Extracellular; the sequence is MQSTEPWSPSWGTLSWDYSGSGSLDQVELCPAWNLPYGHAIIP. The chain crosses the membrane as a helical span at residues 44–64; it reads ALYLAAFAVGLPGNAFVVWLL. Over 65 to 76 the chain is Cytoplasmic; the sequence is SRQRGPRRLVDT. A helical membrane pass occupies residues 77–97; the sequence is FVLHLAAADLGFVLTLPLWAA. At 98-113 the chain is on the extracellular side; the sequence is AEARGGLWPFGDGLCK. Residues Cys-112 and Cys-191 are joined by a disulfide bond. The helical transmembrane segment at 114–134 threads the bilayer; sequence VSSFALAVTRCAGALLLAGMS. At 135–155 the chain is on the cytoplasmic side; that stretch reads VDRYLAVGRPLSARPLRSARC. Residues 156–176 traverse the membrane as a helical segment; sequence VRAVCGAAWAAAFLAGLPALL. Residues 177–200 are Extracellular-facing; sequence YRGLQPSLDGVGSQCAEEPWEALQ. Residues 201–221 traverse the membrane as a helical segment; sequence GVGLLLLLLTFALPLAVTLIC. The Cytoplasmic segment spans residues 222–239; it reads YWRVSRRLPRVGRARSNS. Residues 240–260 form a helical membrane-spanning segment; that stretch reads LRIIFTVESVFVGCWLPFGVL. Topologically, residues 261–284 are extracellular; it reads RSLFHLARLQALPLPCSLLLALRW. A helical transmembrane segment spans residues 285–307; sequence GLTVTTCLAFVNSSANPVIYLLL. The Cytoplasmic segment spans residues 308 to 358; that stretch reads DRSFRARARFGLCARAGRQVRRISSASSLSRDDSSVFRGRSPKVNSASATW. The tract at residues 339 to 358 is disordered; sequence DDSSVFRGRSPKVNSASATW.

It belongs to the G-protein coupled receptor 1 family.

It localises to the membrane. Its function is as follows. Orphan receptor. The polypeptide is Probable G-protein coupled receptor 25 (Gpr25) (Mus musculus (Mouse)).